The primary structure comprises 678 residues: Probable 3',5'-cyclic phosphodiesterase pde-3 (678 aa).

Disordered regions lie at residues methionine 1–threonine 27, alanine 52–glycine 95, and threonine 223–glutamate 250. The segment covering alanine 7–glycine 19 has biased composition (low complexity). 2 stretches are compositionally biased toward polar residues: residues threonine 60–valine 85 and alanine 231–asparagine 246. The PDEase domain occupies arginine 281–glutamate 632. Histidine 356 serves as the catalytic Proton donor. Residues histidine 360, histidine 421, aspartate 422, and aspartate 531 each contribute to the a divalent metal cation site. The interval glutamate 654–glutamine 678 is disordered.

This sequence belongs to the cyclic nucleotide phosphodiesterase family. A divalent metal cation is required as a cofactor.

It catalyses the reaction a nucleoside 3',5'-cyclic phosphate + H2O = a nucleoside 5'-phosphate + H(+). The polypeptide is Probable 3',5'-cyclic phosphodiesterase pde-3 (pde-3) (Caenorhabditis elegans).